We begin with the raw amino-acid sequence, 531 residues long: Efflux pump terG (531 aa).

Positions 1–11 (MSSSTLEGQET) are enriched in polar residues. The segment at 1 to 27 (MSSSTLEGQETASHHSKNSPSRHGDDG) is disordered. Transmembrane regions (helical) follow at residues 86 to 106 (GKLS…ILIG), 117 to 137 (AIFV…GVSV), 145 to 165 (ILAR…ALAI), 179 to 199 (FAWF…FGPL), 207 to 227 (WIYW…IVAI), 249 to 269 (IDLL…FAWN), 280 to 300 (YVYV…YVEL), 319 to 339 (FVFG…FYVI), 351 to 371 (IQMA…ALIV), 380 to 400 (ASSI…LMAL), 402 to 422 (PVHS…TFAM), 447 to 467 (SVIM…AGTI), and 488 to 508 (TLWF…IFLL).

This sequence belongs to the major facilitator superfamily.

It is found in the cell membrane. Efflux pump that might be required for efficient secretion of terrein or other secondary metabolies produced by the terrein genne cluster. This chain is Efflux pump terG, found in Aspergillus terreus (strain NIH 2624 / FGSC A1156).